Here is a 102-residue protein sequence, read N- to C-terminus: Small ribosomal subunit protein uS10 (102 aa).

Belongs to the universal ribosomal protein uS10 family. Part of the 30S ribosomal subunit.

Its function is as follows. Involved in the binding of tRNA to the ribosomes. In Leptospira biflexa serovar Patoc (strain Patoc 1 / Ames), this protein is Small ribosomal subunit protein uS10.